The sequence spans 98 residues: NADH-ubiquinone oxidoreductase chain 4L (98 aa).

3 helical membrane passes run 1–21 (MSSIYMNILLAFTMALLGLLM), 29–49 (SLLCLEGMMLSLFILSTVTML), and 61–81 (VMLMVFAACEAAVGLALLVTV).

This sequence belongs to the complex I subunit 4L family. In terms of assembly, core subunit of respiratory chain NADH dehydrogenase (Complex I) which is composed of 45 different subunits.

The protein resides in the mitochondrion inner membrane. It catalyses the reaction a ubiquinone + NADH + 5 H(+)(in) = a ubiquinol + NAD(+) + 4 H(+)(out). Core subunit of the mitochondrial membrane respiratory chain NADH dehydrogenase (Complex I) which catalyzes electron transfer from NADH through the respiratory chain, using ubiquinone as an electron acceptor. Part of the enzyme membrane arm which is embedded in the lipid bilayer and involved in proton translocation. This chain is NADH-ubiquinone oxidoreductase chain 4L (MT-ND4L), found in Tamandua tetradactyla (Southern anteater).